The following is a 579-amino-acid chain: Probable N-acetylgalactosaminyltransferase 9 (579 aa).

Residues 1-12 (MLRYIIPRKKGT) are Cytoplasmic-facing. A helical; Signal-anchor for type II membrane protein membrane pass occupies residues 13–30 (FVIAAFLTVAFFCIVAYH). Topologically, residues 31 to 579 (RNDRRRTKFQ…KWNFIDPAKA (549 aa)) are lumenal. Asparagine 67 carries N-linked (GlcNAc...) asparagine glycosylation. 5 disulfide bridges follow: cysteine 123-cysteine 356, cysteine 347-cysteine 427, cysteine 464-cysteine 483, cysteine 507-cysteine 520, and cysteine 545-cysteine 562. Positions 133-243 (LPKTSVIIIF…HGWLEPIVQR (111 aa)) are catalytic subdomain A. Aspartate 174 and arginine 204 together coordinate substrate. Position 227 (aspartate 227) interacts with Mn(2+). Serine 228 is a substrate binding site. Histidine 229 provides a ligand contact to Mn(2+). A catalytic subdomain B region spans residues 302–364 (YIRSPTMAGG…PCSHVGHIFR (63 aa)). A substrate-binding site is contributed by tryptophan 333. Histidine 361 serves as a coordination point for Mn(2+). The substrate site is built by arginine 364, histidine 367, and tyrosine 369. An N-linked (GlcNAc...) asparagine glycan is attached at asparagine 370. The Ricin B-type lectin domain maps to 450–574 (AYGALHTVVS…KDEHQKWNFI (125 aa)).

It belongs to the glycosyltransferase 2 family. GalNAc-T subfamily. The cofactor is Mn(2+).

Its subcellular location is the golgi apparatus membrane. It functions in the pathway protein modification; protein glycosylation. Its function is as follows. Probable glycopeptide transferase involved in O-linked oligosaccharide biosynthesis. Glycopeptide transferases catalyze the transfer of an N-acetyl-D-galactosamine residue to an already glycosylated peptide. In contrast to other members of the family, it does not act as a peptide transferase that transfers GalNAc onto serine or threonine residue on peptides that have been tested. Some peptide transferase activity is however not excluded, considering that its appropriate peptide substrate may remain unidentified. The polypeptide is Probable N-acetylgalactosaminyltransferase 9 (gly-9) (Caenorhabditis elegans).